The sequence spans 330 residues: DNA-directed RNA polymerase subunit alpha (330 aa).

The interval 1-235 (MVREKVKVST…DLFIHFLHAK (235 aa)) is alpha N-terminal domain (alpha-NTD). Positions 270 to 330 (IALKYIFIDQ…KQILGILEKK (61 aa)) are alpha C-terminal domain (alpha-CTD).

This sequence belongs to the RNA polymerase alpha chain family. In plastids the minimal PEP RNA polymerase catalytic core is composed of four subunits: alpha, beta, beta', and beta''. When a (nuclear-encoded) sigma factor is associated with the core the holoenzyme is formed, which can initiate transcription.

It is found in the plastid. It localises to the chloroplast. It carries out the reaction RNA(n) + a ribonucleoside 5'-triphosphate = RNA(n+1) + diphosphate. In terms of biological role, DNA-dependent RNA polymerase catalyzes the transcription of DNA into RNA using the four ribonucleoside triphosphates as substrates. The polypeptide is DNA-directed RNA polymerase subunit alpha (rpoA) (Gossypium barbadense (Sea Island cotton)).